The primary structure comprises 539 residues: Phosphoenolpyruvate carboxykinase (ATP) (539 aa).

Residues Arg-61, Tyr-195, and Lys-201 each contribute to the substrate site. Residues Lys-201, His-220, and Gly-238–Thr-246 each bind ATP. Mn(2+) is bound by residues Lys-201 and His-220. A Mn(2+)-binding site is contributed by Asp-259. The ATP site is built by Glu-287, Arg-325, and Thr-450. A substrate-binding site is contributed by Arg-325.

Belongs to the phosphoenolpyruvate carboxykinase (ATP) family. It depends on Mn(2+) as a cofactor.

The protein resides in the cytoplasm. The catalysed reaction is oxaloacetate + ATP = phosphoenolpyruvate + ADP + CO2. The protein operates within carbohydrate biosynthesis; gluconeogenesis. Functionally, involved in the gluconeogenesis. Catalyzes the conversion of oxaloacetate (OAA) to phosphoenolpyruvate (PEP) through direct phosphoryl transfer between the nucleoside triphosphate and OAA. The sequence is that of Phosphoenolpyruvate carboxykinase (ATP) from Methylorubrum extorquens (strain CM4 / NCIMB 13688) (Methylobacterium extorquens).